We begin with the raw amino-acid sequence, 232 residues long: BTB/POZ domain-containing protein KCTD11 (232 aa).

In terms of domain architecture, BTB spans 1-49 (MLGAMFRAGTPMTPNLNPEGGGHYFIDRDGKAFRHILNFLRLGRLDLPL).

Homopentamer. Interacts with KCTD6 and KCTD21; KCTD11 and KCTD6 or KCTD21 may associate in pentameric assemblies. Component of the BCR(KCTD11) E3 ubiquitin ligase complex, at least composed of CUL3 and KCTD11 and RBX1. Interacts (via BTB domain) with CUL3; initially a 4:4 stoichiometry has been reported, however, electron microscopy revealed pentameric states of the BTB domain.

The protein operates within protein modification; protein ubiquitination. In terms of biological role, plays a role as a marker and a regulator of neuronal differentiation; Up-regulated by a variety of neurogenic signals, such as retinoic acid, epidermal growth factor/EGF and NGFB/nerve growth factor. Induces apoptosis, growth arrest and the expression of cyclin-dependent kinase inhibitor CDKN1B. Plays a role as a tumor repressor and inhibits cell growth and tumorigenicity of medulloblastoma (MDB). Acts as a probable substrate-specific adapter for a BCR (BTB-CUL3-RBX1) E3 ubiquitin-protein ligase complex towards HDAC1. Functions as antagonist of the Hedgehog pathway on cell proliferation and differentiation by affecting the nuclear transfer of transcription factor GLI1, thus maintaining cerebellar granule cells in undifferentiated state, this effect probably occurs via HDAC1 down-regulation, keeping GLI1 acetylated and inactive. The sequence is that of BTB/POZ domain-containing protein KCTD11 (KCTD11) from Bos taurus (Bovine).